A 323-amino-acid chain; its full sequence is Methenyltetrahydromethanopterin cyclohydrolase (323 aa).

The protein belongs to the MCH family.

Its subcellular location is the cytoplasm. The enzyme catalyses 5,10-methenyl-5,6,7,8-tetrahydromethanopterin + H2O = N(5)-formyl-5,6,7,8-tetrahydromethanopterin + H(+). It functions in the pathway one-carbon metabolism; methanogenesis from CO(2); 5,10-methenyl-5,6,7,8-tetrahydromethanopterin from CO(2): step 3/3. Its function is as follows. Catalyzes the reversible interconversion of 5-formyl-H(4)MPT to methenyl-H(4)MPT(+). This chain is Methenyltetrahydromethanopterin cyclohydrolase, found in Methanobrevibacter smithii (strain ATCC 35061 / DSM 861 / OCM 144 / PS).